Here is a 180-residue protein sequence, read N- to C-terminus: Pro-glucagon (180 aa).

Residues 1 to 20 (MKNIYIVAGFFVVLVQGSWQ) form the signal peptide. A disordered region spans residues 25 to 59 (DTEEKSRSFPASQTDPLEDPDQINEDKRHSQGTFT). S54 is modified (phosphoserine). The propeptide occupies 84–89 (NRNNIA). Phosphoserine occurs at positions 105 and 108. R127 carries the post-translational modification Arginine amide. Residues 131–145 (DFPEEVTIVEELGRR) constitute a propeptide that is removed on maturation. A phosphoserine mark is found at S150 and S152.

This sequence belongs to the glucagon family. In terms of processing, proglucagon is post-translationally processed in a tissue-specific manner in pancreatic A cells and intestinal L cells. In pancreatic A cells, the major bioactive hormone is glucagon cleaved by PCSK2/PC2. In the intestinal L cells PCSK1/PC1 liberates GLP-1, GLP-2, glicentin and oxyntomodulin. GLP-1 is further N-terminally truncated by post-translational processing in the intestinal L cells resulting in GLP-1(7-37) GLP-1-(7-36)amide. The C-terminal amidation is neither important for the metabolism of GLP-1 nor for its effects on the endocrine pancreas.

The protein resides in the secreted. Plays a key role in glucose metabolism and homeostasis. Regulates blood glucose by increasing gluconeogenesis and decreasing glycolysis. A counterregulatory hormone of insulin, raises plasma glucose levels in response to insulin-induced hypoglycemia. Plays an important role in initiating and maintaining hyperglycemic conditions in diabetes. Its function is as follows. Potent stimulator of glucose-dependent insulin release. Also stimulates insulin release in response to IL6. Plays important roles on gastric motility and the suppression of plasma glucagon levels. May be involved in the suppression of satiety and stimulation of glucose disposal in peripheral tissues, independent of the actions of insulin. Has growth-promoting activities on intestinal epithelium. May also regulate the hypothalamic pituitary axis (HPA) via effects on LH, TSH, CRH, oxytocin, and vasopressin secretion. Increases islet mass through stimulation of islet neogenesis and pancreatic beta cell proliferation. Inhibits beta cell apoptosis. In terms of biological role, stimulates intestinal growth and up-regulates villus height in the small intestine, concomitant with increased crypt cell proliferation and decreased enterocyte apoptosis. The gastrointestinal tract, from the stomach to the colon is the principal target for GLP-2 action. Plays a key role in nutrient homeostasis, enhancing nutrient assimilation through enhanced gastrointestinal function, as well as increasing nutrient disposal. Stimulates intestinal glucose transport and decreases mucosal permeability. Functionally, significantly reduces food intake. Inhibits gastric emptying in humans. Suppression of gastric emptying may lead to increased gastric distension, which may contribute to satiety by causing a sensation of fullness. May modulate gastric acid secretion and the gastro-pyloro-duodenal activity. May play an important role in intestinal mucosal growth in the early period of life. The chain is Pro-glucagon (GCG) from Mesocricetus auratus (Golden hamster).